A 130-amino-acid polypeptide reads, in one-letter code: Large ribosomal subunit protein uL22 (130 aa).

Belongs to the universal ribosomal protein uL22 family. As to quaternary structure, part of the 50S ribosomal subunit.

This protein binds specifically to 23S rRNA; its binding is stimulated by other ribosomal proteins, e.g. L4, L17, and L20. It is important during the early stages of 50S assembly. It makes multiple contacts with different domains of the 23S rRNA in the assembled 50S subunit and ribosome. Its function is as follows. The globular domain of the protein is located near the polypeptide exit tunnel on the outside of the subunit, while an extended beta-hairpin is found that lines the wall of the exit tunnel in the center of the 70S ribosome. In Clavibacter michiganensis subsp. michiganensis (strain NCPPB 382), this protein is Large ribosomal subunit protein uL22.